Reading from the N-terminus, the 141-residue chain is Large ribosomal subunit protein uL11 (141 aa).

It belongs to the universal ribosomal protein uL11 family. As to quaternary structure, part of the ribosomal stalk of the 50S ribosomal subunit. Interacts with L10 and the large rRNA to form the base of the stalk. L10 forms an elongated spine to which L12 dimers bind in a sequential fashion forming a multimeric L10(L12)X complex. In terms of processing, one or more lysine residues are methylated.

In terms of biological role, forms part of the ribosomal stalk which helps the ribosome interact with GTP-bound translation factors. This chain is Large ribosomal subunit protein uL11, found in Prochlorococcus marinus (strain MIT 9515).